The primary structure comprises 449 residues: Glucose-6-phosphate isomerase (449 aa).

Glutamate 291 serves as the catalytic Proton donor. Catalysis depends on residues histidine 312 and lysine 426.

Belongs to the GPI family.

The protein resides in the cytoplasm. It catalyses the reaction alpha-D-glucose 6-phosphate = beta-D-fructose 6-phosphate. It functions in the pathway carbohydrate biosynthesis; gluconeogenesis. The protein operates within carbohydrate degradation; glycolysis; D-glyceraldehyde 3-phosphate and glycerone phosphate from D-glucose: step 2/4. Catalyzes the reversible isomerization of glucose-6-phosphate to fructose-6-phosphate. The protein is Glucose-6-phosphate isomerase of Streptococcus agalactiae serotype Ia (strain ATCC 27591 / A909 / CDC SS700).